Reading from the N-terminus, the 125-residue chain is Egg cell-secreted protein 1.2 (125 aa).

Residues 1–22 (MASNTSFLFATIAILLVLNISG) form the signal peptide.

The protein belongs to the plant egg cell-secreted peptide family. Restricted to female reproductive tissues, specifically accumulating in storage vesicles of the unfertilized egg cell.

It localises to the cytoplasmic vesicle. The protein resides in the secreted. Involved in the regulation of gamete interactions during the double fertilization and to prevent multiple-pollen tube attraction; mediates the redistribution of the gamete fusogen HAP2/GCS1 to the cell surface after secretion upon sperm arrival. This is Egg cell-secreted protein 1.2 (EC1.2) from Arabidopsis thaliana (Mouse-ear cress).